Reading from the N-terminus, the 433-residue chain is Ribonuclease T2-like (433 aa).

Disulfide bonds link C28-C47, C36-C95, C46-C171, and C103-C163. Residues N38 and N71 are each glycosylated (N-linked (GlcNAc...) asparagine). Active-site residues include H88, E156, and H160. Residues N221 and N263 are each glycosylated (N-linked (GlcNAc...) asparagine). Cysteines 247 and 283 form a disulfide.

It belongs to the RNase T2 family.

The protein resides in the vacuole lumen. The protein localises to the cytoplasm. It catalyses the reaction a ribonucleotidyl-ribonucleotide-RNA + H2O = a 3'-end 3'-phospho-ribonucleotide-RNA + a 5'-end dephospho-ribonucleoside-RNA + H(+). Its function is as follows. Rnase which modulates cell survival under stress conditions. Released from the vacuole to the cytoplasm during stress to promote tRNA and rRNA cleavage and to activate separately a downstream pathway that promotes cell death. Involved in cell size, vacuolar morphology and growth at high temperatures and high salt concentration. The sequence is that of Ribonuclease T2-like (RNY1) from Candida glabrata (strain ATCC 2001 / BCRC 20586 / JCM 3761 / NBRC 0622 / NRRL Y-65 / CBS 138) (Yeast).